The primary structure comprises 218 residues: 7-cyano-7-deazaguanine synthase (218 aa).

An ATP-binding site is contributed by leucine 11–leucine 21. 4 residues coordinate Zn(2+): cysteine 193, cysteine 201, cysteine 204, and cysteine 207.

The protein belongs to the QueC family. Zn(2+) serves as cofactor.

The catalysed reaction is 7-carboxy-7-deazaguanine + NH4(+) + ATP = 7-cyano-7-deazaguanine + ADP + phosphate + H2O + H(+). It functions in the pathway purine metabolism; 7-cyano-7-deazaguanine biosynthesis. In terms of biological role, catalyzes the ATP-dependent conversion of 7-carboxy-7-deazaguanine (CDG) to 7-cyano-7-deazaguanine (preQ(0)). In Aquifex aeolicus (strain VF5), this protein is 7-cyano-7-deazaguanine synthase.